A 340-amino-acid chain; its full sequence is Protein RecA (340 aa).

65 to 72 (GPESGGKT) serves as a coordination point for ATP.

The protein belongs to the RecA family.

The protein localises to the cytoplasm. Functionally, can catalyze the hydrolysis of ATP in the presence of single-stranded DNA, the ATP-dependent uptake of single-stranded DNA by duplex DNA, and the ATP-dependent hybridization of homologous single-stranded DNAs. It interacts with LexA causing its activation and leading to its autocatalytic cleavage. The sequence is that of Protein RecA from Thermus aquaticus.